A 581-amino-acid chain; its full sequence is uncharacterized protein (581 aa).

The N-terminal stretch at Met-1–Ala-28 is a signal peptide.

This is an uncharacterized protein from Archaeoglobus fulgidus (strain ATCC 49558 / DSM 4304 / JCM 9628 / NBRC 100126 / VC-16).